The sequence spans 957 residues: Calsyntenin-3 (957 aa).

Positions 1–19 (MTPLLFPLLLASLLPSSSC) are cleaved as a signal peptide. At 20 to 848 (NKANKHKPWI…SHRNSMVPSA (829 aa)) the chain is on the extracellular side. Cadherin domains are found at residues 29-145 (IEAE…APVF) and 146-246 (VERL…KPSW). N-linked (GlcNAc...) asparagine glycans are attached at residues Asn-299, Asn-347, and Asn-508. A helical transmembrane segment spans residues 849–869 (ATLIIVVCVGFLVLMVVLGLV). The Cytoplasmic portion of the chain corresponds to 870-957 (RIHSLHRRVS…RIIETPPHRY (88 aa)). The tract at residues 919–957 (CVAGAAGGQQDDEDSSDSEAADSPSSDERRIIETPPHRY) is disordered. Residues 928-938 (QDDEDSSDSEA) are compositionally biased toward acidic residues. The segment covering 944–957 (SDERRIIETPPHRY) has biased composition (basic and acidic residues).

It belongs to the calsyntenin family. In terms of assembly, interacts (via cadherin domains) with both alpha and beta isoforms of neurexins (NRXN1, NRXN2 and NRXN3). Directly interacts with APBA2. Forms a tripartite complex with APBA2 and APP. Interacts with low affinity with KLC1. Interacts with SLC23A2/SVCT2. Proteolytically processed under normal cellular conditions. A primary zeta-cleavage generates a large extracellular (soluble) N-terminal domain (sAlc) and a short C-terminal transmembrane fragment (CTF1). A secondary cleavage catalyzed by gamma-secretase within the transmembrane domain releases the beta-Alc-beta chain in the extracellular milieu and produces an intracellular fragment (AlcICD). This processing is strongly suppressed in the tripartite complex formed with APBA2 and APP, which seems to prevent the association with gamma-secretase.

It is found in the postsynaptic cell membrane. Its subcellular location is the endoplasmic reticulum membrane. The protein resides in the golgi apparatus membrane. The protein localises to the cell projection. It localises to the dendrite. Functionally, postsynaptic adhesion molecule that binds to presynaptic neurexins to mediate both excitatory and inhibitory synapse formation. Promotes synapse development by acting as a cell adhesion molecule at the postsynaptic membrane, which associates with both neurexin-alpha and neurexin-beta proteins at the presynaptic membrane. Regulates the balance between excitatory and inhibitory synapses by inhibiting formation of excitatory parallel-fiber synapses and promoting formation of inhibitory synapses in the same neuron. May also be involved in ascorbate (vitamin C) uptake via its interaction with SLC23A2/SVCT2. Complex formation with APBA2 and APP, stabilizes APP metabolism and enhances APBA2-mediated suppression of beta-APP40 secretion, due to the retardation of intracellular APP maturation. In Bos taurus (Bovine), this protein is Calsyntenin-3 (CLSTN3).